Here is a 441-residue protein sequence, read N- to C-terminus: Maltose-6'-phosphate glucosidase (441 aa).

4 to 70 (FSILIAGGGS…PQIKFSYSTN (67 aa)) contacts NAD(+). Arginine 93 and asparagine 147 together coordinate substrate. Cysteine 169 is a Mn(2+) binding site. The active-site Proton donor is aspartate 170. A Mn(2+)-binding site is contributed by histidine 200. Tyrosine 264 (proton acceptor) is an active-site residue. Position 284 (arginine 284) interacts with substrate.

This sequence belongs to the glycosyl hydrolase 4 family. As to quaternary structure, homotetramer. NAD(+) serves as cofactor. The cofactor is Mn(2+). Requires Fe(2+) as cofactor. It depends on Co(2+) as a cofactor. Ni(2+) is required as a cofactor.

It carries out the reaction alpha-maltose 6'-phosphate + H2O = D-glucose 6-phosphate + D-glucose. It participates in glycan degradation; maltose degradation. Its function is as follows. Hydrolyzes a wide variety of 6-phospho-alpha-D-glucosides including maltose-6'P, trehalose-6P and the 6'-phosphorylated derivatives of the five linkage-isomeric alpha-D-glucosyl-D-fructoses: trehalulose-6'P, turanose-6'P, maltulose-6'P, leucrose-6'P, and palatinose-6'P. However, sucrose-6P is not a substrate for MalH, and this enzyme also fails to hydrolyze beta-O-linked phosphorylated disaccharides such as cellobiose-6'P and gentobiose-6'P. The protein is Maltose-6'-phosphate glucosidase (malH) of Fusobacterium mortiferum.